Reading from the N-terminus, the 681-residue chain is PTS system glucose-specific EIICBA component (681 aa).

In terms of domain architecture, PTS EIIC type-1 spans 3-414; sequence KKLFGQLQRI…LKYKTPGRED (412 aa). The next 10 membrane-spanning stretches (helical) occupy residues 16–36, 73–93, 126–146, 170–190, 199–219, 273–293, 303–323, 328–348, 355–375, and 383–403; these read LMLPVAILPAAGLLLAIGTAI, MIFALGVAIGLAGGDGVAAIA, ILGIPTLQTGVFGGIIIGALA, FVPIMMATTSFILAFPMALIW, AFSTGLLDSNTGVAVFLFGFI, FMQGEFPVMMFGLPAAALAIY, VVAGLMGSAALTSFLTGITEP, FLFVAPLLFFIHAVLDGLSFL, VHLGYTFSGGFIDYVLLGVLP, and VIPVGLVYAVIYYFVFRFLIV. The PTS EIIB type-1 domain maps to 425 to 506; sequence TELPYAVLEA…QQIMNGQVVE (82 aa). Cysteine 447 functions as the Phosphocysteine intermediate; for EIIB activity in the catalytic mechanism. The 105-residue stretch at 551–655 folds into the PTS EIIA type-1 domain; the sequence is DQVFSEKMMG…SDITPIIVTQ (105 aa). Histidine 603 serves as the catalytic Tele-phosphohistidine intermediate; for EIIA activity.

It localises to the cell membrane. The catalysed reaction is N(pros)-phospho-L-histidyl-[protein] + D-glucose(out) = D-glucose 6-phosphate(in) + L-histidyl-[protein]. Functionally, the phosphoenolpyruvate-dependent sugar phosphotransferase system (sugar PTS), a major carbohydrate active transport system, catalyzes the phosphorylation of incoming sugar substrates concomitantly with their translocation across the cell membrane. This system is involved in glucose transport. The chain is PTS system glucose-specific EIICBA component (ptsG) from Staphylococcus aureus (strain JH9).